Here is a 160-residue protein sequence, read N- to C-terminus: Cytochrome b6-f complex subunit 4 (160 aa).

The next 3 helical transmembrane spans lie at 36 to 56, 95 to 115, and 128 to 148; these read LLYI…GLAV, LLGI…PFIE, and IAMA…IGAC.

The protein belongs to the cytochrome b family. PetD subfamily. In terms of assembly, the 4 large subunits of the cytochrome b6-f complex are cytochrome b6, subunit IV (17 kDa polypeptide, PetD), cytochrome f and the Rieske protein, while the 4 small subunits are PetG, PetL, PetM and PetN. The complex functions as a dimer.

It is found in the cellular thylakoid membrane. Component of the cytochrome b6-f complex, which mediates electron transfer between photosystem II (PSII) and photosystem I (PSI), cyclic electron flow around PSI, and state transitions. This is Cytochrome b6-f complex subunit 4 from Prochlorococcus marinus (strain MIT 9313).